The sequence spans 36 residues: Phosphoglycerate kinase, chloroplastic (36 aa).

(2R)-3-phosphoglycerate is bound by residues A22, D23, and N25.

The protein belongs to the phosphoglycerate kinase family. In terms of assembly, monomer. It depends on Mg(2+) as a cofactor.

The protein resides in the plastid. The protein localises to the chloroplast. It catalyses the reaction (2R)-3-phosphoglycerate + ATP = (2R)-3-phospho-glyceroyl phosphate + ADP. Its pathway is carbohydrate biosynthesis; Calvin cycle. In Scenedesmus fuscus (Green alga), this protein is Phosphoglycerate kinase, chloroplastic.